The sequence spans 296 residues: Tyrosine recombinase XerC (296 aa).

One can recognise a Core-binding (CB) domain in the interval 2-85 (ADQASWLERF…ALKQFGQFLL (84 aa)). Positions 106–285 (TLPKNLDPDS…DFQHLAKVYD (180 aa)) constitute a Tyr recombinase domain. Catalysis depends on residues R145, K169, H237, R240, and H263. The O-(3'-phospho-DNA)-tyrosine intermediate role is filled by Y272.

Belongs to the 'phage' integrase family. XerC subfamily. Forms a cyclic heterotetrameric complex composed of two molecules of XerC and two molecules of XerD.

The protein localises to the cytoplasm. Functionally, site-specific tyrosine recombinase, which acts by catalyzing the cutting and rejoining of the recombining DNA molecules. The XerC-XerD complex is essential to convert dimers of the bacterial chromosome into monomers to permit their segregation at cell division. It also contributes to the segregational stability of plasmids. The chain is Tyrosine recombinase XerC from Shewanella amazonensis (strain ATCC BAA-1098 / SB2B).